The sequence spans 201 residues: Dephospho-CoA kinase (201 aa).

In terms of domain architecture, DPCK spans 4–201 (SVGLTGNIAS…KYLREAKIKQ (198 aa)). 12–17 (ASGKST) provides a ligand contact to ATP.

It belongs to the CoaE family.

The protein resides in the cytoplasm. It catalyses the reaction 3'-dephospho-CoA + ATP = ADP + CoA + H(+). Its pathway is cofactor biosynthesis; coenzyme A biosynthesis; CoA from (R)-pantothenate: step 5/5. In terms of biological role, catalyzes the phosphorylation of the 3'-hydroxyl group of dephosphocoenzyme A to form coenzyme A. In Legionella pneumophila (strain Paris), this protein is Dephospho-CoA kinase.